Reading from the N-terminus, the 259-residue chain is Small ribosomal subunit protein mS23 (259 aa).

Belongs to the mitochondrion-specific ribosomal protein mS23 family. In terms of assembly, component of the mitochondrial small ribosomal subunit.

It is found in the mitochondrion. This chain is Small ribosomal subunit protein mS23 (RSM25), found in Pyricularia oryzae (strain 70-15 / ATCC MYA-4617 / FGSC 8958) (Rice blast fungus).